The chain runs to 480 residues: tRNA (guanine(37)-N(1))-methyltransferase (480 aa).

A mitochondrion-targeting transit peptide spans 1–18; it reads MAAVWRRSARLFILLQRH. S-adenosyl-L-methionine-binding positions include His273, 311–312, 339–340, and Asn367; these read DL and DG. Positions 458–480 are disordered; sequence HTQDRDTSEEPCPKKQKCEDSTN.

This sequence belongs to the class I-like SAM-binding methyltransferase superfamily. TRM5/TYW2 family. Monomer.

Its subcellular location is the mitochondrion matrix. The protein resides in the nucleus. It localises to the cytoplasm. It catalyses the reaction guanosine(37) in tRNA + S-adenosyl-L-methionine = N(1)-methylguanosine(37) in tRNA + S-adenosyl-L-homocysteine + H(+). Involved in mitochondrial tRNA methylation. Specifically methylates the N1 position of guanosine-37 in various tRNAs. Methylation is not dependent on the nature of the nucleoside 5' of the target nucleoside. This is the first step in the biosynthesis of wybutosine (yW), a modified base adjacent to the anticodon of tRNAs and required for accurate decoding. The sequence is that of tRNA (guanine(37)-N(1))-methyltransferase (trmt5) from Danio rerio (Zebrafish).